Reading from the N-terminus, the 598-residue chain is MSIISMNVSILSKPLNCLHNLERRPSKALLVPCTAPTARLRASCSSKLQEAHQIRRSGNYQPALWDSNYIQSLNTPYTEERHLDRKAELIVQVRILLKEKMEPVQQLELIHDLKYLGLSDFFQDEIKEILGVIYNEHKCFHNNEVEKMDLYFTALGFRLLRQHGFNISQDVFNCFKNEKGIDFKASLAQDTKGMLQLYEASFLLRKGEDTLELAREFATKCLQKKLDEGGNEIDENLLLWIRHSLDLPLHWRIQSVEARWFIDAYARRPDMNPLIFELAKLNFNIIQATHQQELKDLSRWWSRLCFPEKLPFVRDRLVESFFWAVGMFEPHQHGYQRKMAATIIVLATVIDDIYDVYGTLDELELFTDTFKRWDTESITRLPYYMQLCYWGVHNYISDAAYDILKEHGFFCLQYLRKSVVDLVEAYFHEAKWYHSGYTPSLDEYLNIAKISVASPAIISPTYFTFANASHDTAVIDSLYQYHDILCLAGIILRLPDDLGTSYFELARGDVPKTIQCYMKETNASEEEAVEHVKFLIREAWKDMNTAIAAGYPFPDGMVAGAANIGRVAQFIYLHGDGFGVQHSKTYEHIAGLLFEPYA.

The N-terminal 54 residues, 1–54 (MSIISMNVSILSKPLNCLHNLERRPSKALLVPCTAPTARLRASCSSKLQEAHQI), are a transit peptide targeting the chloroplast. Residue R314 coordinates substrate. Mg(2+) is bound by residues D351 and D355. A DDXXD motif motif is present at residues 351–355 (DDIYD). R493 provides a ligand contact to substrate. Residues D496, T500, and E504 each contribute to the Mg(2+) site. T500 contributes to the substrate binding site. Residue K512 participates in substrate binding.

It belongs to the terpene synthase family. In terms of assembly, homodimer. Requires Mg(2+) as cofactor.

Its subcellular location is the plastid. The protein localises to the chloroplast. It catalyses the reaction (2E)-geranyl diphosphate = (2S,4R)-bornyl diphosphate. It carries out the reaction (2E)-geranyl diphosphate = (1R,4S)-camphene + diphosphate. The catalysed reaction is (2E)-geranyl diphosphate = (1R,5R)-alpha-pinene + diphosphate. It functions in the pathway terpene metabolism; (R)-camphor biosynthesis. Catalyzes the formation of the (+)-camphor precursor (+)-bornyl diphosphate from geranyl diphosphate. The enzyme also produces significant amounts of (+)-alpha-pinene, (+)-camphene, and (+-)-limonene. The protein is (+)-bornyl diphosphate synthase, chloroplastic of Salvia officinalis (Sage).